Reading from the N-terminus, the 411-residue chain is Tyrosine--tRNA ligase (411 aa).

Tyr-34 contributes to the L-tyrosine binding site. The 'HIGH' region signature appears at 39–48 (CTATSLHIGS). Residues Tyr-171 and Gln-175 each contribute to the L-tyrosine site. Positions 231–235 (KMGKT) match the 'KMSKS' region motif. An ATP-binding site is contributed by Lys-234. The S4 RNA-binding domain occupies 345-411 (ISAYELFHEA…GKKKHILVRV (67 aa)).

The protein belongs to the class-I aminoacyl-tRNA synthetase family. TyrS type 1 subfamily. As to quaternary structure, homodimer.

It localises to the cytoplasm. It catalyses the reaction tRNA(Tyr) + L-tyrosine + ATP = L-tyrosyl-tRNA(Tyr) + AMP + diphosphate + H(+). In terms of biological role, catalyzes the attachment of tyrosine to tRNA(Tyr) in a two-step reaction: tyrosine is first activated by ATP to form Tyr-AMP and then transferred to the acceptor end of tRNA(Tyr). The protein is Tyrosine--tRNA ligase of Rickettsia conorii (strain ATCC VR-613 / Malish 7).